The sequence spans 89 residues: Small ribosomal subunit protein bS20 (89 aa).

Belongs to the bacterial ribosomal protein bS20 family.

Functionally, binds directly to 16S ribosomal RNA. The sequence is that of Small ribosomal subunit protein bS20 from Wolbachia pipientis wMel.